We begin with the raw amino-acid sequence, 308 residues long: Putative S-adenosyl-L-methionine-dependent methyltransferase Mb3816c (308 aa).

Residues D131 and 160–161 (DL) each bind S-adenosyl-L-methionine.

This sequence belongs to the UPF0677 family.

Its function is as follows. Exhibits S-adenosyl-L-methionine-dependent methyltransferase activity. The polypeptide is Putative S-adenosyl-L-methionine-dependent methyltransferase Mb3816c (Mycobacterium bovis (strain ATCC BAA-935 / AF2122/97)).